A 103-amino-acid chain; its full sequence is Large ribosomal subunit protein uL23 (103 aa).

The protein belongs to the universal ribosomal protein uL23 family. Part of the 50S ribosomal subunit. Contacts protein L29, and trigger factor when it is bound to the ribosome.

In terms of biological role, one of the early assembly proteins it binds 23S rRNA. One of the proteins that surrounds the polypeptide exit tunnel on the outside of the ribosome. Forms the main docking site for trigger factor binding to the ribosome. This chain is Large ribosomal subunit protein uL23, found in Chlorobium luteolum (strain DSM 273 / BCRC 81028 / 2530) (Pelodictyon luteolum).